A 57-amino-acid chain; its full sequence is Protein translocase subunit SecE (57 aa).

Residues 33–53 (GAGIFLVGLLGFIIFAVMSFL) traverse the membrane as a helical segment.

This sequence belongs to the SecE/SEC61-gamma family. Component of the Sec protein translocase complex. Heterotrimer consisting of SecY (alpha), SecG (beta) and SecE (gamma) subunits. The heterotrimers can form oligomers, although 1 heterotrimer is thought to be able to translocate proteins. Interacts with the ribosome. May interact with SecDF, and other proteins may be involved.

The protein resides in the cell membrane. In terms of biological role, essential subunit of the Sec protein translocation channel SecYEG. Clamps together the 2 halves of SecY. May contact the channel plug during translocation. This is Protein translocase subunit SecE from Haloferax mediterranei (strain ATCC 33500 / DSM 1411 / JCM 8866 / NBRC 14739 / NCIMB 2177 / R-4) (Halobacterium mediterranei).